We begin with the raw amino-acid sequence, 130 residues long: Small ribosomal subunit protein uS9 (130 aa).

The protein belongs to the universal ribosomal protein uS9 family.

In Exiguobacterium sibiricum (strain DSM 17290 / CCUG 55495 / CIP 109462 / JCM 13490 / 255-15), this protein is Small ribosomal subunit protein uS9.